The following is a 620-amino-acid chain: MTTEHLDRIHSPADLRKLDRRDLKPIADELRAFVLESVSKTGGHLSSNLGTVELTLALHYVFDTPHDRIVWDVGHQTYPHKILTGRRDRMATLRQEGGISGFPKRSESEYDDFGTAHSSTSISAALGMAVASRNAGVARQHIAVIGDGAMSAGMAFEAMNNAGVTSDINLLVILNDNDMSISPPVGALNRYLARLMSGRFYAAAKNMGKAVLQHVPPVLELARRFEEHAKGMITSATMFEEFGFNYVGPIDGHDLDALIPTLQNLKTLQGLQFLHVVTRKGRGYKLAEVDPVLYHGPGKFDPAVGIQAAKTPAKRTFTQVFGAWLCDQAEADPRLVGITPAMREGSGLVEFEQRFPKRYFDVGIAEQHAVTFAAGLACEGQKPVVAIYSTFLQRGYDQVVHDVALQNLDVTFALDRAGLVGADGATHAGNYDIAFLRCVPNMVIATPSDENETRLLLSTCYAYPGPASVRYPRGAGCGAAVSAGLDTVPLGKGVVRRRGARIAIMGFGTLVPAALAAAEKLDATVADMRFVKPLDVELLRELAATHEALVTLEDAAVMGGAGSAVTEALNMAGLTLPVLQLGLPDVFIDHGDQAALLAGVGLDAAGIERSVRERFASLLG.

Residues His-75 and 116 to 118 contribute to the thiamine diphosphate site; that span reads AHS. Asp-147 contacts Mg(2+). Residues 148-149, Asn-177, Tyr-284, and Glu-366 each bind thiamine diphosphate; that span reads GA. Residue Asn-177 participates in Mg(2+) binding.

The protein belongs to the transketolase family. DXPS subfamily. As to quaternary structure, homodimer. Mg(2+) serves as cofactor. The cofactor is thiamine diphosphate.

The enzyme catalyses D-glyceraldehyde 3-phosphate + pyruvate + H(+) = 1-deoxy-D-xylulose 5-phosphate + CO2. It functions in the pathway metabolic intermediate biosynthesis; 1-deoxy-D-xylulose 5-phosphate biosynthesis; 1-deoxy-D-xylulose 5-phosphate from D-glyceraldehyde 3-phosphate and pyruvate: step 1/1. Catalyzes the acyloin condensation reaction between C atoms 2 and 3 of pyruvate and glyceraldehyde 3-phosphate to yield 1-deoxy-D-xylulose-5-phosphate (DXP). This chain is 1-deoxy-D-xylulose-5-phosphate synthase, found in Bordetella avium (strain 197N).